The chain runs to 671 residues: Arginine--tRNA ligase (671 aa).

The short motif at 124-134 is the 'HIGH' region element; that stretch reads PNVAKPMHVGH. Positions 223-254 are disordered; sequence KSDAKTAKEVSDQSESDENLKPKDKKKLRKNA. Positions 224 to 233 are enriched in basic and acidic residues; sequence SDAKTAKEVS.

This sequence belongs to the class-I aminoacyl-tRNA synthetase family. Monomer.

It localises to the cytoplasm. It catalyses the reaction tRNA(Arg) + L-arginine + ATP = L-arginyl-tRNA(Arg) + AMP + diphosphate. The chain is Arginine--tRNA ligase from Rhodopirellula baltica (strain DSM 10527 / NCIMB 13988 / SH1).